Reading from the N-terminus, the 251-residue chain is Tyrosine phosphatase-like protein J3 (251 aa).

The Tyrosine-protein phosphatase domain maps to 26-251 (IADEYYTIVP…PVLQNSKRRE (226 aa)).

This sequence belongs to the protein-tyrosine phosphatase family.

This Microplitis demolitor (Parasitoid wasp) protein is Tyrosine phosphatase-like protein J3 (J4).